Consider the following 856-residue polypeptide: DNA mismatch repair protein MutS (856 aa).

600–607 (GPNMSGKS) lines the ATP pocket.

Belongs to the DNA mismatch repair MutS family.

In terms of biological role, this protein is involved in the repair of mismatches in DNA. It is possible that it carries out the mismatch recognition step. This protein has a weak ATPase activity. This chain is DNA mismatch repair protein MutS, found in Lactobacillus acidophilus (strain ATCC 700396 / NCK56 / N2 / NCFM).